A 454-amino-acid polypeptide reads, in one-letter code: Glutaredoxin domain-containing cysteine-rich protein CG31559 (454 aa).

Disordered regions lie at residues 30 to 88 (ETAD…QRQK) and 217 to 239 (RSARSGDEADHSTGAGSEAGSDS). Residues 33–45 (DSGNGSDLESTGL) show a composition bias toward polar residues. Low complexity predominate over residues 58 to 69 (SSLGSDSMHGSS). Positions 70–84 (TEYVRQSASQPSGQR) are enriched in polar residues. Residues 217 to 227 (RSARSGDEADH) show a composition bias toward basic and acidic residues. A Glutaredoxin domain is found at 295 to 400 (NAKNFKEKDL…QLLKPYKSMA (106 aa)).

It belongs to the GRXCR1 family.

The protein is Glutaredoxin domain-containing cysteine-rich protein CG31559 of Drosophila melanogaster (Fruit fly).